A 104-amino-acid chain; its full sequence is UPF0145 protein DET1617 (104 aa).

The protein belongs to the UPF0145 family.

The chain is UPF0145 protein DET1617 from Dehalococcoides mccartyi (strain ATCC BAA-2266 / KCTC 15142 / 195) (Dehalococcoides ethenogenes (strain 195)).